Here is a 72-residue protein sequence, read N- to C-terminus: UPF0346 protein GTNG_1419 (72 aa).

It belongs to the UPF0346 family.

The protein is UPF0346 protein GTNG_1419 of Geobacillus thermodenitrificans (strain NG80-2).